The sequence spans 282 residues: HTH-type transcriptional activator RhaR (282 aa).

One can recognise an HTH araC/xylS-type domain in the interval 179–277; sequence DKLITALANS…GMTPSQWRHL (99 aa). 2 consecutive DNA-binding regions (H-T-H motif) follow at residues 196-217 and 244-267; these read DAFC…RAQT and VSEI…TRET.

In terms of assembly, binds DNA as a dimer.

It is found in the cytoplasm. Its function is as follows. Activates expression of the rhaSR operon in response to L-rhamnose. This Salmonella choleraesuis (strain SC-B67) protein is HTH-type transcriptional activator RhaR.